The chain runs to 72 residues: NAD(P)H-quinone oxidoreductase subunit O (72 aa).

Belongs to the complex I NdhO subunit family. In terms of assembly, NDH-1 can be composed of about 15 different subunits; different subcomplexes with different compositions have been identified which probably have different functions.

It is found in the cellular thylakoid membrane. The catalysed reaction is a plastoquinone + NADH + (n+1) H(+)(in) = a plastoquinol + NAD(+) + n H(+)(out). The enzyme catalyses a plastoquinone + NADPH + (n+1) H(+)(in) = a plastoquinol + NADP(+) + n H(+)(out). Functionally, NDH-1 shuttles electrons from an unknown electron donor, via FMN and iron-sulfur (Fe-S) centers, to quinones in the respiratory and/or the photosynthetic chain. The immediate electron acceptor for the enzyme in this species is believed to be plastoquinone. Couples the redox reaction to proton translocation, and thus conserves the redox energy in a proton gradient. Cyanobacterial NDH-1 also plays a role in inorganic carbon-concentration. This is NAD(P)H-quinone oxidoreductase subunit O from Rippkaea orientalis (strain PCC 8801 / RF-1) (Cyanothece sp. (strain PCC 8801)).